A 436-amino-acid chain; its full sequence is GTPase Der (436 aa).

2 consecutive EngA-type G domains span residues 4–167 (PTVA…PNEI) and 175–351 (IKFS…HAQN). Residues 10 to 17 (GRPNVGKS), 57 to 61 (DTGGI), 119 to 122 (NKVD), 181 to 188 (GRPNVGKS), 229 to 233 (DTAGM), and 294 to 297 (NKWD) each bind GTP. The region spanning 352-436 (LRISSSVLND…PIHLIARKRK (85 aa)) is the KH-like domain.

It belongs to the TRAFAC class TrmE-Era-EngA-EngB-Septin-like GTPase superfamily. EngA (Der) GTPase family. In terms of assembly, associates with the 50S ribosomal subunit.

In terms of biological role, GTPase that plays an essential role in the late steps of ribosome biogenesis. The chain is GTPase Der from Lactococcus lactis subsp. cremoris (strain SK11).